A 153-amino-acid polypeptide reads, in one-letter code: Endoribonuclease YbeY (153 aa).

Zn(2+)-binding residues include His112, His116, and His122.

It belongs to the endoribonuclease YbeY family. Zn(2+) is required as a cofactor.

It localises to the cytoplasm. Functionally, single strand-specific metallo-endoribonuclease involved in late-stage 70S ribosome quality control and in maturation of the 3' terminus of the 16S rRNA. This is Endoribonuclease YbeY from Persephonella marina (strain DSM 14350 / EX-H1).